Here is a 311-residue protein sequence, read N- to C-terminus: Asialoglycoprotein receptor 2 (311 aa).

The interval 1-44 (MAKDFQDIQQLSSEENDHPFHQGEGPGTRRLNPRRGNPFLKGPP) is disordered. At 1-58 (MAKDFQDIQQLSSEENDHPFHQGEGPGTRRLNPRRGNPFLKGPPPAQPLAQRLCSMVC) the chain is on the cytoplasmic side. An Endocytosis signal motif is present at residues 5–8 (FQDI). Ser13 is subject to Phosphoserine. Cys54 carries the S-palmitoyl cysteine lipid modification. The helical; Signal-anchor for type II membrane protein transmembrane segment at 59–79 (FSLLALSFNILLLVVICVTGS) threads the bilayer. Topologically, residues 80 to 311 (QSEGHGGAQL…KRRNATGEVA (232 aa)) are extracellular. Residues Asn102 and Asn170 are each glycosylated (N-linked (GlcNAc...) asparagine). The C-type lectin domain occupies 176–302 (CCPVNWVEHQ…LQVYRWVCEK (127 aa)). 3 disulfides stabilise this stretch: Cys177–Cys188, Cys205–Cys300, and Cys278–Cys292. Asn305 is a glycosylation site (N-linked (GlcNAc...) asparagine).

In terms of assembly, the functioning ligand-binding unit of this receptor is thought to be at least a dimer. Interacts with LASS2. (Microbial infection) Interacts with hepatitis E virus capsid protein ORF2. As to expression, expressed exclusively in hepatic parenchymal cells.

It is found in the membrane. In terms of biological role, mediates the endocytosis of plasma glycoproteins to which the terminal sialic acid residue on their complex carbohydrate moieties has been removed. The receptor recognizes terminal galactose and N-acetylgalactosamine units. After ligand binding to the receptor, the resulting complex is internalized and transported to a sorting organelle, where receptor and ligand are disassociated. The receptor then returns to the cell membrane surface. This is Asialoglycoprotein receptor 2 (ASGR2) from Homo sapiens (Human).